The chain runs to 248 residues: UPF0246 protein A1G_03985 (248 aa).

The protein belongs to the UPF0246 family.

The protein is UPF0246 protein A1G_03985 of Rickettsia rickettsii (strain Sheila Smith).